Consider the following 424-residue polypeptide: Tyrosine--tRNA ligase (424 aa).

Position 37 (Y37) interacts with L-tyrosine. The 'HIGH' region signature appears at P42–H51. Y175 and Q179 together coordinate L-tyrosine. The short motif at K235–T239 is the 'KMSKS' region element. K238 contacts ATP. The S4 RNA-binding domain occupies A357–G414.

This sequence belongs to the class-I aminoacyl-tRNA synthetase family. TyrS type 1 subfamily. Homodimer.

The protein localises to the cytoplasm. The catalysed reaction is tRNA(Tyr) + L-tyrosine + ATP = L-tyrosyl-tRNA(Tyr) + AMP + diphosphate + H(+). Its function is as follows. Catalyzes the attachment of tyrosine to tRNA(Tyr) in a two-step reaction: tyrosine is first activated by ATP to form Tyr-AMP and then transferred to the acceptor end of tRNA(Tyr). This Yersinia enterocolitica serotype O:8 / biotype 1B (strain NCTC 13174 / 8081) protein is Tyrosine--tRNA ligase.